The primary structure comprises 200 residues: Adenine phosphoribosyltransferase (200 aa).

Belongs to the purine/pyrimidine phosphoribosyltransferase family. Homodimer.

The protein localises to the cytoplasm. It catalyses the reaction AMP + diphosphate = 5-phospho-alpha-D-ribose 1-diphosphate + adenine. The protein operates within purine metabolism; AMP biosynthesis via salvage pathway; AMP from adenine: step 1/1. Functionally, catalyzes a salvage reaction resulting in the formation of AMP, that is energically less costly than de novo synthesis. The polypeptide is Adenine phosphoribosyltransferase (Sorangium cellulosum (strain So ce56) (Polyangium cellulosum (strain So ce56))).